The sequence spans 256 residues: Thiazole synthase (256 aa).

The active-site Schiff-base intermediate with DXP is the K97. Residues G158, 184 to 185, and 206 to 207 contribute to the 1-deoxy-D-xylulose 5-phosphate site; these read AG and NT.

This sequence belongs to the ThiG family. In terms of assembly, homotetramer. Forms heterodimers with either ThiH or ThiS.

The protein resides in the cytoplasm. It catalyses the reaction [ThiS sulfur-carrier protein]-C-terminal-Gly-aminoethanethioate + 2-iminoacetate + 1-deoxy-D-xylulose 5-phosphate = [ThiS sulfur-carrier protein]-C-terminal Gly-Gly + 2-[(2R,5Z)-2-carboxy-4-methylthiazol-5(2H)-ylidene]ethyl phosphate + 2 H2O + H(+). It participates in cofactor biosynthesis; thiamine diphosphate biosynthesis. Catalyzes the rearrangement of 1-deoxy-D-xylulose 5-phosphate (DXP) to produce the thiazole phosphate moiety of thiamine. Sulfur is provided by the thiocarboxylate moiety of the carrier protein ThiS. In vitro, sulfur can be provided by H(2)S. In Pelotomaculum thermopropionicum (strain DSM 13744 / JCM 10971 / SI), this protein is Thiazole synthase.